A 509-amino-acid polypeptide reads, in one-letter code: Aromatase (509 aa).

C437 is a heme binding site.

The protein belongs to the cytochrome P450 family. Heme serves as cofactor.

It is found in the membrane. The catalysed reaction is testosterone + 3 reduced [NADPH--hemoprotein reductase] + 3 O2 = 17beta-estradiol + formate + 3 oxidized [NADPH--hemoprotein reductase] + 4 H2O + 4 H(+). It carries out the reaction androst-4-ene-3,17-dione + 3 reduced [NADPH--hemoprotein reductase] + 3 O2 = estrone + formate + 3 oxidized [NADPH--hemoprotein reductase] + 4 H2O + 4 H(+). Functionally, catalyzes the formation of aromatic C18 estrogens from C19 androgens. In Taeniopygia guttata (Zebra finch), this protein is Aromatase (CYP19A1).